Here is a 127-residue protein sequence, read N- to C-terminus: Probable tautomerase YusQ (127 aa).

Proline 2 (proton acceptor; via imino nitrogen) is an active-site residue.

Belongs to the 4-oxalocrotonate tautomerase family.

The protein is Probable tautomerase YusQ (yusQ) of Bacillus subtilis (strain 168).